Consider the following 350-residue polypeptide: Biotin synthase (350 aa).

Residues N41 to R268 form the Radical SAM core domain. [4Fe-4S] cluster is bound by residues C56, C60, and C63. Positions 100, 131, 191, and 263 each coordinate [2Fe-2S] cluster.

The protein belongs to the radical SAM superfamily. Biotin synthase family. In terms of assembly, homodimer. [4Fe-4S] cluster is required as a cofactor. The cofactor is [2Fe-2S] cluster.

The catalysed reaction is (4R,5S)-dethiobiotin + (sulfur carrier)-SH + 2 reduced [2Fe-2S]-[ferredoxin] + 2 S-adenosyl-L-methionine = (sulfur carrier)-H + biotin + 2 5'-deoxyadenosine + 2 L-methionine + 2 oxidized [2Fe-2S]-[ferredoxin]. It functions in the pathway cofactor biosynthesis; biotin biosynthesis; biotin from 7,8-diaminononanoate: step 2/2. Functionally, catalyzes the conversion of dethiobiotin (DTB) to biotin by the insertion of a sulfur atom into dethiobiotin via a radical-based mechanism. The chain is Biotin synthase from Shewanella oneidensis (strain ATCC 700550 / JCM 31522 / CIP 106686 / LMG 19005 / NCIMB 14063 / MR-1).